The chain runs to 1280 residues: Multidrug resistance protein 1 (1280 aa).

Topologically, residues 1–72 are cytoplasmic; it reads MSRAHAAYAN…YADATDRVLM (72 aa). The ABC transmembrane type-1 1 domain maps to 72-357; that stretch reads MIAGTAFAVA…VAPSRTAFTE (286 aa). The next 6 helical transmembrane spans lie at 73-93, 120-140, 189-209, 216-236, 297-317, and 326-345; these read IAGTAFAVACGAGMPVFSFIF, YVGIAMLIACAGHVMCWTVAA, KLSQGIMNGSMGVIGYIAGFV, LMMIGMMPFIIVMAAIIGSIV, LSAAVIMALMYVSYTVAFFFG, and RDMADIISTFLAVLMGSFGL. At 346 to 712 the chain is on the cytoplasmic side; the sequence is GFVAPSRTAF…MRMNKDKAWA (367 aa). An ABC transporter 1 domain is found at 391 to 634; the sequence is IEFRNVRFAY…DGEFAAVAKM (244 aa). Position 426-433 (426-433) interacts with ATP; that stretch reads GASGCGKS. Helical transmembrane passes span 713 to 733, 762 to 781, 837 to 857, 858 to 878, 938 to 958, and 976 to 996; these read VALGILSSVVIGSARPASSIV, PLFIVFAVANFSGWILHGFY, IGLKVQTMCIIASGLVVGFIY, QWKLALVALACMPLMIGCSLT, IIAGGIYGITQFIFYGVYALC, and VMIASMSILFGAQNAGEAGAF. The region spanning 713–1002 is the ABC transmembrane type-1 2 domain; sequence VALGILSSVV…AGAFATKLAD (290 aa). One can recognise an ABC transporter 2 domain in the interval 1036–1274; sequence IEYRNVQFIY…GGEYKTRYDL (239 aa). 1071-1078 serves as a coordination point for ATP; sequence GQTGCGKS. N1113 carries an N-linked (GlcNAc...) asparagine glycan.

This sequence belongs to the ABC transporter superfamily. ABCB family. Multidrug resistance exporter (TC 3.A.1.201) subfamily.

It is found in the membrane. It catalyses the reaction ATP + H2O + xenobioticSide 1 = ADP + phosphate + xenobioticSide 2.. Energy-dependent efflux pump responsible for decreased drug accumulation in multi-drug-resistant cells. Confers vinblastine resistance. The sequence is that of Multidrug resistance protein 1 (MDR1) from Leishmania enriettii.